The primary structure comprises 259 residues: Glycerol-3-phosphate acyltransferase (259 aa).

7 helical membrane-spanning segments follow: residues 11–31, 62–82, 93–112, 124–144, 152–172, 188–208, and 211–231; these read IILA…IIIV, LVVA…AILL, TSYF…PIYY, LGLL…VWFI, VSVA…IPYL, FSVA…HYWF, and IWAS…LILG.

Belongs to the PlsY family. Probably interacts with PlsX.

It localises to the cell membrane. The enzyme catalyses an acyl phosphate + sn-glycerol 3-phosphate = a 1-acyl-sn-glycero-3-phosphate + phosphate. The protein operates within lipid metabolism; phospholipid metabolism. In terms of biological role, catalyzes the transfer of an acyl group from acyl-phosphate (acyl-PO(4)) to glycerol-3-phosphate (G3P) to form lysophosphatidic acid (LPA). This enzyme utilizes acyl-phosphate as fatty acyl donor, but not acyl-CoA or acyl-ACP. This chain is Glycerol-3-phosphate acyltransferase, found in Mycoplasma capricolum subsp. capricolum (strain California kid / ATCC 27343 / NCTC 10154).